We begin with the raw amino-acid sequence, 364 residues long: MQDRQKAQDYRALLLADTPLIDVRAPIEFEQGAMPGAINLPLMMDNERAAVGTCYKRQGADAALALGHRLVCGDIRQQRLEAWKAAYQRFPNGYLCCARGGQRSHIVQRWLQETGIDCPLIEGGYKALRQTAIQATWQLAQKPILLIGGCTGSGKTQLVRQQPNGVDLEGLARHRGSSFGRTLNPQLSQASFENKLAVELLKINAHQTLKRWVLEDEGRTIGANHLPECLRERMAQAPIAVVEDPFALRLERLREEYFIRMHHDFTHAYGDEAGWQAYSEYLHHGLFAIRRRLGLQRFAELTDTLDRALAEQLSNGSTDGHMAWLVPLLNEYYDPMYRYQLEKKAANIVFRGPWQDVANWLKAQ.

The 124-residue stretch at 14 to 137 (LLADTPLIDV…LRQTAIQATW (124 aa)) folds into the Rhodanese domain. Residue Cys-97 is the S-selanylcysteine intermediate of the active site.

The protein belongs to the SelU family. Monomer.

It carries out the reaction 5-methylaminomethyl-2-thiouridine(34) in tRNA + selenophosphate + (2E)-geranyl diphosphate + H2O + H(+) = 5-methylaminomethyl-2-selenouridine(34) in tRNA + (2E)-thiogeraniol + phosphate + diphosphate. The enzyme catalyses 5-methylaminomethyl-2-thiouridine(34) in tRNA + (2E)-geranyl diphosphate = 5-methylaminomethyl-S-(2E)-geranyl-thiouridine(34) in tRNA + diphosphate. The catalysed reaction is 5-methylaminomethyl-S-(2E)-geranyl-thiouridine(34) in tRNA + selenophosphate + H(+) = 5-methylaminomethyl-2-(Se-phospho)selenouridine(34) in tRNA + (2E)-thiogeraniol. It catalyses the reaction 5-methylaminomethyl-2-(Se-phospho)selenouridine(34) in tRNA + H2O = 5-methylaminomethyl-2-selenouridine(34) in tRNA + phosphate. Involved in the post-transcriptional modification of the uridine at the wobble position (U34) of tRNA(Lys), tRNA(Glu) and tRNA(Gln). Catalyzes the conversion of 2-thiouridine (S2U-RNA) to 2-selenouridine (Se2U-RNA). Acts in a two-step process involving geranylation of 2-thiouridine (S2U) to S-geranyl-2-thiouridine (geS2U) and subsequent selenation of the latter derivative to 2-selenouridine (Se2U) in the tRNA chain. This Salmonella agona (strain SL483) protein is tRNA 2-selenouridine synthase.